Consider the following 562-residue polypeptide: Ycf55-like protein (562 aa).

The Response regulatory domain occupies 7–125; it reads TIVIVDEDPV…DLVTGLKQVH (119 aa).

Belongs to the ycf55 family.

This chain is Ycf55-like protein, found in Synechocystis sp. (strain ATCC 27184 / PCC 6803 / Kazusa).